A 605-amino-acid chain; its full sequence is Capsid scaffolding protein (605 aa).

Active-site charge relay system residues include H52, S120, and H139. The interaction with pAP stretch occupies residues 326-344 (GEFVLIPTAYYSQLLTGQT). Positions 585-605 (IQGSTADDADMFANQMMVGRC) are interaction with major capsid protein.

This sequence belongs to the herpesviridae capsid scaffolding protein family. As to quaternary structure, homomultimer. Interacts with major capsid protein. Exists in a monomer-dimer equilibrium with the dimer being the active species. Post-translationally, capsid scaffolding protein is cleaved by assemblin after formation of the spherical procapsid. As a result, the capsid obtains its mature, icosahedral shape. Cleavages occur at two or more sites: release (R-site) and maturation (M-site).

The protein localises to the host cytoplasm. The protein resides in the host nucleus. The enzyme catalyses Cleaves -Ala-|-Ser- and -Ala-|-Ala- bonds in the scaffold protein.. Its function is as follows. Acts as a scaffold protein by binding major capsid protein in the cytoplasm, inducing the nuclear localization of both proteins. Multimerizes in the nucleus such as major capsid protein forms the icosahedral T=16 capsid. Autocatalytic cleavage releases the assembly protein, and subsequently abolishes interaction with major capsid protein. Cleavages products are evicted from the capsid before or during DNA packaging. Protease that plays an essential role in virion assembly within the nucleus. Catalyzes the cleavage of the assembly protein after formation of the spherical procapsid. By that cleavage, the capsid matures and gains its icosahedral shape. The cleavage sites seem to include -Ala-Ser-, -Ala-Ala-, as well as Ala-Thr bonds. Assemblin and cleavages products are evicted from the capsid before or during DNA packaging. In terms of biological role, plays a major role in capsid assembly. Acts as a scaffold protein by binding major capsid protein. Multimerizes in the nucleus such as major capsid protein forms the icosahedral T=16 capsid. Cleaved by assemblin after capsid completion. The cleavages products are evicted from the capsid before or during DNA packaging. The sequence is that of Capsid scaffolding protein (33) from Varicella-zoster virus (strain Dumas) (HHV-3).